The following is a 650-amino-acid chain: Aminopeptidase B (650 aa).

Ser-7 is modified (phosphoserine). Substrate is bound at residue Gly-298–Asn-302. Position 325 (His-325) interacts with Zn(2+). Residue Glu-326 is the Proton acceptor of the active site. Zn(2+) is bound by residues His-329 and Glu-348. An N6-acetyllysine modification is found at Lys-446.

It belongs to the peptidase M1 family. As to quaternary structure, monomer. Requires Zn(2+) as cofactor. Widely expressed.

The protein localises to the secreted. It catalyses the reaction Release of N-terminal Arg and Lys from oligopeptides when P1' is not Pro. Also acts on arylamides of Arg and Lys.. Exopeptidase which selectively removes arginine and/or lysine residues from the N-terminus of several peptide substrates including Arg(0)-Leu-enkephalin, Arg(0)-Met-enkephalin and Arg(-1)-Lys(0)-somatostatin-14. Can hydrolyze leukotriene A4 (LTA-4) into leukotriene B4 (LTB-4). This Rattus norvegicus (Rat) protein is Aminopeptidase B (Rnpep).